The primary structure comprises 430 residues: Enolase (430 aa).

Gln164 contacts (2R)-2-phosphoglycerate. Glu208 serves as the catalytic Proton donor. Asp245, Glu288, and Asp315 together coordinate Mg(2+). Residues Lys340, Arg369, Ser370, and Lys391 each contribute to the (2R)-2-phosphoglycerate site. The Proton acceptor role is filled by Lys340.

It belongs to the enolase family. It depends on Mg(2+) as a cofactor.

The protein resides in the cytoplasm. Its subcellular location is the secreted. It is found in the cell surface. It carries out the reaction (2R)-2-phosphoglycerate = phosphoenolpyruvate + H2O. The protein operates within carbohydrate degradation; glycolysis; pyruvate from D-glyceraldehyde 3-phosphate: step 4/5. Catalyzes the reversible conversion of 2-phosphoglycerate (2-PG) into phosphoenolpyruvate (PEP). It is essential for the degradation of carbohydrates via glycolysis. This chain is Enolase, found in Thermococcus kodakarensis (strain ATCC BAA-918 / JCM 12380 / KOD1) (Pyrococcus kodakaraensis (strain KOD1)).